Consider the following 1040-residue polypeptide: Multidrug resistance protein MdtB (1040 aa).

The next 12 helical transmembrane spans lie at 25 to 45 (LLMV…PVAA), 342 to 362 (DTQF…YLFL), 369 to 389 (IIPG…MVFL), 396 to 416 (LTLM…IVVI), 440 to 460 (IGFT…PLLF), 472 to 492 (FAVT…TLTP), 537 to 557 (WLTL…WVFI), 863 to 883 (LGST…VLGV), 888 to 908 (FIHP…ALLA), 911 to 931 (IAGS…IGIV), 967 to 987 (PILM…LSTG), and 998 to 1018 (IGMV…TPVI).

It belongs to the resistance-nodulation-cell division (RND) (TC 2.A.6) family. MdtB subfamily. In terms of assembly, part of a tripartite efflux system composed of MdtA, MdtB and MdtC. MdtB forms a heteromultimer with MdtC.

It localises to the cell inner membrane. This is Multidrug resistance protein MdtB from Citrobacter koseri (strain ATCC BAA-895 / CDC 4225-83 / SGSC4696).